We begin with the raw amino-acid sequence, 354 residues long: tRNA N6-adenosine threonylcarbamoyltransferase (354 aa).

Fe cation contacts are provided by His-115 and His-119. Residues 138-142 (LVSGG), Asp-171, Gly-184, and Asn-285 contribute to the substrate site. Asp-313 serves as a coordination point for Fe cation.

Belongs to the KAE1 / TsaD family. Fe(2+) is required as a cofactor.

Its subcellular location is the cytoplasm. It carries out the reaction L-threonylcarbamoyladenylate + adenosine(37) in tRNA = N(6)-L-threonylcarbamoyladenosine(37) in tRNA + AMP + H(+). Required for the formation of a threonylcarbamoyl group on adenosine at position 37 (t(6)A37) in tRNAs that read codons beginning with adenine. Is involved in the transfer of the threonylcarbamoyl moiety of threonylcarbamoyl-AMP (TC-AMP) to the N6 group of A37, together with TsaE and TsaB. TsaD likely plays a direct catalytic role in this reaction. This is tRNA N6-adenosine threonylcarbamoyltransferase from Albidiferax ferrireducens (strain ATCC BAA-621 / DSM 15236 / T118) (Rhodoferax ferrireducens).